The following is a 749-amino-acid chain: Cytosolic phospholipase A2 (749 aa).

Positions 1–178 are phospholipid binding; it reads MSFIDPYQHI…MKKLLGPKNS (178 aa). At Ser-2 the chain carries Phosphoserine. The 117-residue stretch at 6–122 folds into the C2 domain; the sequence is PYQHIIVEHH…KVGEKKQVPF (117 aa). The Ca(2+) site is built by Asp-40, Thr-41, Asp-43, Asn-65, Asp-93, Ala-94, and Asn-95. Positions 140–740 constitute a PLA2c domain; the sequence is SSPDLRFSMA…SSVEARRFFN (601 aa). Residue Ser-228 is the Nucleophile of the active site. At Thr-268 the chain carries Phosphothreonine. The tract at residues 426–458 is disordered; it reads AKHIVSNDSSDSDDESQGPKGTEHEEAEREYQN. Phosphoserine occurs at positions 434, 435, and 437. Over residues 446 to 457 the composition is skewed to basic and acidic residues; sequence GTEHEEAEREYQ. A Phosphoserine; by MAPK modification is found at Ser-505. A Phosphoserine modification is found at Ser-515. Residue Lys-541 forms a Glycyl lysine isopeptide (Lys-Gly) (interchain with G-Cter in SUMO2) linkage. The Proton acceptor role is filled by Asp-549. Lys-606 is covalently cross-linked (Glycyl lysine isopeptide (Lys-Gly) (interchain with G-Cter in SUMO2)). 2 positions are modified to phosphoserine: Ser-727 and Ser-729.

In terms of assembly, interacts with KAT5. Post-translationally, phosphorylated at both Ser-505 and Ser-727 in response to mitogenic stimuli. In terms of tissue distribution, detected in granulosa cells after stimulation with chorionic gonadotropin (at protein level).

The protein localises to the cytoplasm. It localises to the golgi apparatus membrane. The protein resides in the nucleus envelope. It catalyses the reaction a 1,2-diacyl-sn-glycero-3-phosphocholine + H2O = a 1-acyl-sn-glycero-3-phosphocholine + a fatty acid + H(+). The enzyme catalyses a 1-O-alkyl-2-acyl-sn-glycero-3-phosphocholine + H2O = a 1-O-alkyl-sn-glycero-3-phosphocholine + a fatty acid + H(+). The catalysed reaction is a 1-acyl-sn-glycero-3-phosphocholine + H2O = sn-glycerol 3-phosphocholine + a fatty acid + H(+). It carries out the reaction 1-hexadecanoyl-2-(5Z,8Z,11Z,14Z-eicosatetraenoyl)-sn-glycero-3-phosphocholine + H2O = 1-hexadecanoyl-sn-glycero-3-phosphocholine + (5Z,8Z,11Z,14Z)-eicosatetraenoate + H(+). It catalyses the reaction 1,2-di-(5Z,8Z,11Z,14Z-eicosatetraenoyl)-sn-glycero-3-phosphocholine + H2O = 1-(5Z,8Z,11Z,14Z-eicosatetraenoyl)-sn-glycero-3-phosphocholine + (5Z,8Z,11Z,14Z)-eicosatetraenoate + H(+). The enzyme catalyses 1-octadecanoyl-2-(5Z,8Z,11Z,14Z-eicosatetraenoyl)-sn-glycero-3-phosphocholine + H2O = 1-octadecanoyl-sn-glycero-3-phosphocholine + (5Z,8Z,11Z,14Z)-eicosatetraenoate + H(+). The catalysed reaction is 1-hexadecanoyl-2-(9Z,12Z-octadecadienoyl)-sn-glycero-3-phosphocholine + H2O = (9Z,12Z)-octadecadienoate + 1-hexadecanoyl-sn-glycero-3-phosphocholine + H(+). It carries out the reaction 1-octadecanoyl-2-(9Z,12Z,15Z-octadecatrienoyl)-sn-glycero-3-phosphocholine + H2O = (9Z,12Z,15Z)-octadecatrienoate + 1-octadecanoyl-sn-glycero-3-phosphocholine + H(+). It catalyses the reaction 1-(5Z,8Z,11Z,14Z-eicosatetraenoyl)-2-hexadecanoyl-sn-glycero-3-phosphocholine + H2O = 1-(5Z,8Z,11Z,14Z-eicosatetraenoyl)-sn-glycero-3-phosphocholine + hexadecanoate + H(+). The enzyme catalyses 1-O-hexadecyl-2-(5Z,8Z,11Z,14Z)-eicosatetraenoyl-sn-glycero-3-phosphocholine + H2O = 1-O-hexadecyl-sn-glycero-3-phosphocholine + (5Z,8Z,11Z,14Z)-eicosatetraenoate + H(+). The catalysed reaction is 1,2-di-(9Z-octadecenoyl)-sn-glycero-3-phospho-(1'-sn-glycerol) + H2O = 1-(9Z-octadecenoyl)-sn-glycero-3-phospho-(1'-sn-glycerol) + (9Z)-octadecenoate + H(+). It carries out the reaction 1-octadecanoyl-2-(5Z,8Z,11Z,14Z-eicosatetraenoyl)-sn-glycero-3-phosphate + H2O = 1-octadecanoyl-sn-glycero-3-phosphate + (5Z,8Z,11Z,14Z)-eicosatetraenoate + H(+). It catalyses the reaction 1-hexadecanoyl-sn-glycero-3-phosphocholine + H2O = sn-glycerol 3-phosphocholine + hexadecanoate + H(+). The enzyme catalyses 2-(prostaglandin E2)-sn-glycero-3-phosphoethanolamine + H2O = sn-glycero-3-phosphoethanolamine + prostaglandin E2 + H(+). The catalysed reaction is 2-[(15S)-hydroxy-(5Z,8Z,11Z,13E)-eicosatetraenoyl]-sn-glycero-3-phosphocholine + H2O = (15S)-hydroxy-(5Z,8Z,11Z,13E)-eicosatetraenoate + sn-glycerol 3-phosphocholine + H(+). It carries out the reaction 2-[(15R)-hydroxy-(5Z,8Z,11Z,13E)-eicosatetraenoyl]-sn-glycero-3-phosphocholine + H2O = (15R)-hydroxy-(5Z,8Z,11Z,13E)-eicosatetraenoate + sn-glycerol 3-phosphocholine + H(+). It catalyses the reaction 2-(prostaglandin E2)-sn-glycero-3-phosphocholine + H2O = prostaglandin E2 + sn-glycerol 3-phosphocholine + H(+). The enzyme catalyses 2-[(11R)-hydroxy-(5Z,8Z,12E,14Z)-eicosatetraenoyl]-sn-glycero-3-phosphocholine + H2O = (11R)-hydroxy-(5Z,8Z,12E,14Z)-eicosatetraenoate + sn-glycerol 3-phosphocholine + H(+). The catalysed reaction is 1-(5Z,8Z,11Z,14Z-eicosatetraenoyl)-2-O-hexadecyl-sn-glycero-3-phosphocholine + H2O = 2-O-hexadecyl-sn-glycero-3-phosphocholine + (5Z,8Z,11Z,14Z)-eicosatetraenoate + H(+). It carries out the reaction 1-octadecanoyl-2-(5Z,8Z,11Z,14Z-eicosatetraenoyl)-sn-glycero-3-phosphocholine + glycerol = 1-(5Z,8Z,11Z,14Z-eicosatetraenoyl)-glycerol + 1-octadecanoyl-sn-glycero-3-phosphocholine. It catalyses the reaction 1-octadecanoyl-2-(9Z,12Z,15Z-octadecatrienoyl)-sn-glycero-3-phosphocholine + glycerol = 1-(9Z,12Z,15Z-octadecatrienoyl)-glycerol + 1-octadecanoyl-sn-glycero-3-phosphocholine. Its pathway is membrane lipid metabolism; glycerophospholipid metabolism. It functions in the pathway lipid metabolism; arachidonate metabolism. It participates in lipid metabolism; prostaglandin biosynthesis. The protein operates within lipid metabolism; leukotriene B4 biosynthesis. Its activity is regulated as follows. Activated by cytosolic calcium, which is necessary for binding to membrane lipids. Activated by phosphorylation in response to mitogenic stimuli. Functionally, has primarily calcium-dependent phospholipase and lysophospholipase activities, with a major role in membrane lipid remodeling and biosynthesis of lipid mediators of the inflammatory response. Plays an important role in embryo implantation and parturition through its ability to trigger prostanoid production. Preferentially hydrolyzes the ester bond of the fatty acyl group attached at sn-2 position of phospholipids (phospholipase A2 activity). Selectively hydrolyzes sn-2 arachidonoyl group from membrane phospholipids, providing the precursor for eicosanoid biosynthesis via the cyclooxygenase pathway. In an alternative pathway of eicosanoid biosynthesis, hydrolyzes sn-2 fatty acyl chain of eicosanoid lysophopholipids to release free bioactive eicosanoids. Hydrolyzes the ester bond of the fatty acyl group attached at sn-1 position of phospholipids (phospholipase A1 activity) only if an ether linkage rather than an ester linkage is present at the sn-2 position. This hydrolysis is not stereospecific. Has calcium-independent phospholipase A2 and lysophospholipase activities in the presence of phosphoinositides. Has O-acyltransferase activity. Catalyzes the transfer of fatty acyl chains from phospholipids to a primary hydroxyl group of glycerol (sn-1 or sn-3), potentially contributing to monoacylglycerol synthesis. This is Cytosolic phospholipase A2 (PLA2G4A) from Bos taurus (Bovine).